The primary structure comprises 156 residues: Aspartate carbamoyltransferase regulatory chain (156 aa).

Residues Cys109, Cys114, Cys140, and Cys143 each coordinate Zn(2+).

Belongs to the PyrI family. As to quaternary structure, contains catalytic and regulatory chains. Zn(2+) serves as cofactor.

Functionally, involved in allosteric regulation of aspartate carbamoyltransferase. The chain is Aspartate carbamoyltransferase regulatory chain from Methanosarcina barkeri (strain Fusaro / DSM 804).